The following is a 336-amino-acid chain: Pyridoxal 5'-phosphate synthase subunit PdxS (336 aa).

Asp62 contributes to the D-ribose 5-phosphate binding site. Lys119 (schiff-base intermediate with D-ribose 5-phosphate) is an active-site residue. Gly191 is a D-ribose 5-phosphate binding site. Residue Lys203 coordinates D-glyceraldehyde 3-phosphate. D-ribose 5-phosphate is bound by residues Gly254 and 275 to 276 (GS).

Belongs to the PdxS/SNZ family. As to quaternary structure, in the presence of PdxT, forms a dodecamer of heterodimers.

It catalyses the reaction aldehydo-D-ribose 5-phosphate + D-glyceraldehyde 3-phosphate + L-glutamine = pyridoxal 5'-phosphate + L-glutamate + phosphate + 3 H2O + H(+). It participates in cofactor biosynthesis; pyridoxal 5'-phosphate biosynthesis. Its function is as follows. Catalyzes the formation of pyridoxal 5'-phosphate from ribose 5-phosphate (RBP), glyceraldehyde 3-phosphate (G3P) and ammonia. The ammonia is provided by the PdxT subunit. Can also use ribulose 5-phosphate and dihydroxyacetone phosphate as substrates, resulting from enzyme-catalyzed isomerization of RBP and G3P, respectively. The sequence is that of Pyridoxal 5'-phosphate synthase subunit PdxS from Pyrobaculum calidifontis (strain DSM 21063 / JCM 11548 / VA1).